A 559-amino-acid chain; its full sequence is Glutamine--tRNA ligase (559 aa).

The 'HIGH' region motif lies at 44 to 54 (PEPNGYLHIGH). ATP-binding positions include 45 to 47 (EPN) and 51 to 57 (HIGHAKS). Positions 77 and 222 each coordinate L-glutamine. Residues Thr241 and 272–273 (RL) each bind ATP. The 'KMSKS' region signature appears at 279 to 283 (LTSKR).

The protein belongs to the class-I aminoacyl-tRNA synthetase family. Monomer.

The protein resides in the cytoplasm. The enzyme catalyses tRNA(Gln) + L-glutamine + ATP = L-glutaminyl-tRNA(Gln) + AMP + diphosphate. The polypeptide is Glutamine--tRNA ligase (Pasteurella multocida (strain Pm70)).